A 226-amino-acid polypeptide reads, in one-letter code: Acyl-homoserine-lactone synthase (226 aa).

The protein belongs to the autoinducer synthase family.

The enzyme catalyses a fatty acyl-[ACP] + S-adenosyl-L-methionine = an N-acyl-L-homoserine lactone + S-methyl-5'-thioadenosine + holo-[ACP] + H(+). Functionally, required for the synthesis of OHHL (N-(3-oxohexanoyl)-L-homoserine lactone), an autoinducer molecule. This chain is Acyl-homoserine-lactone synthase (psyI), found in Pseudomonas amygdali pv. tabaci (Pseudomonas syringae pv. tabaci).